The following is a 912-amino-acid chain: Alpha-actinin-4 (912 aa).

The actin-binding stretch occupies residues 1–267; it reads MVDYHAANQA…IMTYVSSFYH (267 aa). The segment at 12–27 is interaction with VCL; it reads QYGPNSGGGNGAGGGG. A disordered region spans residues 12–31; sequence QYGPNSGGGNGAGGGGSMGD. Residues 16-29 are compositionally biased toward gly residues; that stretch reads NSGGGNGAGGGGSM. A Phosphotyrosine modification is found at tyrosine 32. Residues 41–62 are interaction with VCL; sequence RDLLLDPAWEKQQRKTFTAWCN. Calponin-homology (CH) domains are found at residues 51–155 and 164–270; these read KQQR…LRFA and TSAK…HAFS. Positions 85–89 match the LXXLL motif motif; it reads LMLLL. Residues 109–127 are interaction with VCL; that stretch reads KINNVNKALDFIASKGVKL. Position 115 is an N6-acetyllysine (lysine 115). The segment at 178–193 is polyphosphoinositide (PIP2)-binding; it reads TAPYKNVNVQNFHISW. Position 215 is an N6-acetyllysine (lysine 215). Threonine 250 is modified (phosphothreonine). Spectrin repeat units lie at residues 294–404, 414–519, 529–640, and 650–753; these read HLME…WLLN, HLAE…ALEK, QLHL…ALLE, and HLRR…EVEN. Residues lysine 593 and lysine 626 each carry the N6-acetyllysine modification. The residue at position 697 (serine 697) is a Phosphoserine. Positions 737-912 are mediates interaction with MICALL2; it reads WEQLLTTIAR…STALYGESDL (176 aa). 2 EF-hand domains span residues 766–801 and 807–842; these read EQMQ…LGYD and QGDA…ETTD. Aspartate 779 is a binding site for Ca(2+). Lysine 780 carries the post-translational modification N6-acetyllysine. The Ca(2+) site is built by aspartate 781 and glutamate 790. N6-acetyllysine is present on lysine 860. Serine 910 is modified (phosphoserine).

Belongs to the alpha-actinin family. As to quaternary structure, homodimer; antiparallel. Interacts with MAGI1. Interacts with PDLIM2. Identified in a complex with CASK, IQGAP1, MAGI2, NPHS1, SPTAN1 and SPTBN1. Identified in a IGF2BP1-dependent mRNP granule complex containing untranslated mRNAs. Component of the CART complex, at least composed of ACTN4, HGS/HRS, MYO5B and TRIM3. Binds TRIM3 at the N-terminus. Interacts with MICALL2 (preferentially in opened conformation); stimulated by RAB13 activation. Interacts with PPARG and RARA. Binds to VCL; this interaction triggers VCL conformational changes. Interacts with SEPTIN14. Interacts with IGSF8.

It is found in the nucleus. It localises to the cytoplasm. The protein resides in the cell junction. Its subcellular location is the cytoskeleton. The protein localises to the stress fiber. It is found in the perinuclear region. Its function is as follows. F-actin cross-linking protein which is thought to anchor actin to a variety of intracellular structures. This is a bundling protein. Probably involved in vesicular trafficking via its association with the CART complex. The CART complex is necessary for efficient transferrin receptor recycling but not for EGFR degradation. Involved in tight junction assembly in epithelial cells probably through interaction with MICALL2. Links MICALL2 to the actin cytoskeleton and recruits it to the tight junctions. May also function as a transcriptional coactivator, stimulating transcription mediated by the nuclear hormone receptors PPARG and RARA. Association with IGSF8 regulates the immune synapse formation and is required for efficient T-cell activation. The polypeptide is Alpha-actinin-4 (Mus musculus (Mouse)).